The following is a 267-amino-acid chain: MSYFEAFMLALVQGFTEFLPISSSAHLILPSAVLGWEDQGLAFDVAVHVGTLAAVVIYFRKEVVSLLSAFFGSVFKGDRSKEAKLAWMIILATIPACIFGLLMKDIVELYLRSAWVIATTTIIFGLLLWWVDKNSSLRDDEYQAGWKKALFIGLAQAMAIIPGTSRSGATITAALYLGFTREAAARFSFLMSIPIITLAGGYLGLKLVTSGDPIHVGTLLTGIVVSFISAYICIHFFLKLISRMGMTPFVIYRLILGFGLFAFLMMQ.

A run of 8 helical transmembrane segments spans residues Met1–Ile21, Gln39–Phe59, Ala83–Met103, Leu111–Val131, Ala144–Thr164, Phe189–Thr209, Thr218–Leu238, and Met246–Met266.

It belongs to the UppP family.

The protein resides in the cell inner membrane. It carries out the reaction di-trans,octa-cis-undecaprenyl diphosphate + H2O = di-trans,octa-cis-undecaprenyl phosphate + phosphate + H(+). In terms of biological role, catalyzes the dephosphorylation of undecaprenyl diphosphate (UPP). Confers resistance to bacitracin. The protein is Undecaprenyl-diphosphatase of Vibrio atlanticus (strain LGP32) (Vibrio splendidus (strain Mel32)).